The primary structure comprises 359 residues: Peptide chain release factor 1 (359 aa).

Residue Q236 is modified to N5-methylglutamine.

This sequence belongs to the prokaryotic/mitochondrial release factor family. In terms of processing, methylated by PrmC. Methylation increases the termination efficiency of RF1.

Its subcellular location is the cytoplasm. Its function is as follows. Peptide chain release factor 1 directs the termination of translation in response to the peptide chain termination codons UAG and UAA. The protein is Peptide chain release factor 1 (prfA) of Mycoplasma genitalium (strain ATCC 33530 / DSM 19775 / NCTC 10195 / G37) (Mycoplasmoides genitalium).